We begin with the raw amino-acid sequence, 318 residues long: tRNA-modifying protein YgfZ (318 aa).

Residues tryptophan 28 and tryptophan 182 each contribute to the folate site.

Belongs to the tRNA-modifying YgfZ family.

The protein localises to the cytoplasm. Functionally, folate-binding protein involved in regulating the level of ATP-DnaA and in the modification of some tRNAs. It is probably a key factor in regulatory networks that act via tRNA modification, such as initiation of chromosomal replication. This is tRNA-modifying protein YgfZ from Aliivibrio fischeri (strain ATCC 700601 / ES114) (Vibrio fischeri).